The following is a 97-amino-acid chain: Acylphosphatase (97 aa).

The Acylphosphatase-like domain maps to 9–97 (RKHIVVTGLV…ETARAFGVRQ (89 aa)). Active-site residues include Arg24 and Asn42.

The protein belongs to the acylphosphatase family.

The enzyme catalyses an acyl phosphate + H2O = a carboxylate + phosphate + H(+). The sequence is that of Acylphosphatase (acyP) from Bifidobacterium longum (strain NCC 2705).